A 162-amino-acid polypeptide reads, in one-letter code: Ubiquitin-fold modifier-conjugating enzyme 1 (162 aa).

Cys115 acts as the Glycyl thioester intermediate in catalysis.

The protein belongs to the ubiquitin-conjugating enzyme family. UFC1 subfamily. Interacts with uba-5.

In terms of biological role, E2-like enzyme which forms an intermediate with ufm-1. The intermediate is formed via a thioester linkage. This Caenorhabditis briggsae protein is Ubiquitin-fold modifier-conjugating enzyme 1.